We begin with the raw amino-acid sequence, 192 residues long: Ion-translocating oxidoreductase complex subunit B (192 aa).

The segment at 1-26 is hydrophobic; that stretch reads MEMIVIAVVALTLLALLFGMLLGYAS. The region spanning 32-91 is the 4Fe-4S domain; the sequence is EEDPVVDQVDELLPQSQCGQCGYPGCRPYAEAVANNGEQINRCVPGGEPVMQKIATLLNV. Residues Cys49, Cys52, Cys57, Cys74, Cys117, Cys120, Cys123, Cys127, Cys147, Cys150, Cys153, and Cys157 each contribute to the [4Fe-4S] cluster site. 2 4Fe-4S ferredoxin-type domains span residues 108–137 and 138–167; these read MLAV…GATR and AMHT…LRPA.

This sequence belongs to the 4Fe4S bacterial-type ferredoxin family. RnfB subfamily. The complex is composed of six subunits: RnfA, RnfB, RnfC, RnfD, RnfE and RnfG. Requires [4Fe-4S] cluster as cofactor.

The protein resides in the cell inner membrane. Functionally, part of a membrane-bound complex that couples electron transfer with translocation of ions across the membrane. The protein is Ion-translocating oxidoreductase complex subunit B of Cronobacter sakazakii (strain ATCC BAA-894) (Enterobacter sakazakii).